Reading from the N-terminus, the 374-residue chain is Translocating chain-associated membrane protein 1 (374 aa).

The Cytoplasmic portion of the chain corresponds to Met1–Cys29. Residues Val30 to Phe50 traverse the membrane as a helical segment. Over Val51–Gly76 the chain is Lumenal. Asn56 carries an N-linked (GlcNAc...) asparagine glycan. The helical transmembrane segment at Ile77 to Ile97 threads the bilayer. At Gln98–Glu121 the chain is on the cytoplasmic side. Residues Ser117 to His326 enclose the TLC domain. Residues Ser122–Ser142 form a helical membrane-spanning segment. The Lumenal segment spans residues Glu143 to Asn159. Residues Leu160–Phe180 form a helical membrane-spanning segment. The Cytoplasmic segment spans residues Pro181–Asp192. Residues Ile193–Leu213 form a helical membrane-spanning segment. The Lumenal portion of the chain corresponds to Asn214 to His217. A helical transmembrane segment spans residues Leu218–Leu238. Topologically, residues Phe239 to Ser251 are cytoplasmic. The chain crosses the membrane as a helical span at residues Leu252–Val272. Topologically, residues Gly273–Arg297 are lumenal. A helical transmembrane segment spans residues Ile298–Phe318. Residues Gln319–Ser374 lie on the Cytoplasmic side of the membrane. Basic residues predominate over residues Val334 to Lys347. Residues Val334 to Ser374 form a disordered region. The segment covering Asn352–Ala363 has biased composition (polar residues). Ser365 bears the Phosphoserine mark.

The protein belongs to the TRAM family. As to quaternary structure, interacts with SEC61B. May interact with Derlin-1/DERL1. (Microbial infection) Interacts with human cytomegalovirus/HHV-5 proteins US2 and US11. N-glycosylated.

Its subcellular location is the endoplasmic reticulum membrane. Functionally, involved in the translocation of nascent protein chains into or through the endoplasmic reticulum (ER) membrane by facilitating the proper chain positioning at the SEC61 channel. Regulates the exposure of nascent secretory protein chain to the cytosol during translocation into the ER. May affect the phospholipid bilayer in the vicinity of the lateral gate of the SEC61 channel, thereby facilitating ER protein transport. Intimately associates with transmembrane (TM) domain of nascent membrane proteins during the entire integration process into the ER membrane. Associates with the second TM domain of G-protein-coupled receptor opsin/OPSD nascent chain in the ER membrane, which may facilitate its integration into the membrane. Under conditions of ER stress, participates in the disposal of misfolded ER membrane proteins during the unfolded protein response (UPR), an integrated stress response (ISR) pathway, by selectively retrotranslocating misfolded ER-membrane proteins from the ER into the cytosol where they are ubiquitinated and degraded by the proteasome. In terms of biological role, (Microbial infection) In case of cytomegalovirus infection, participates in US2- and US11-mediated ER-to-cytosol retrotranslocation and subsequent degradation of major histocompatibility complex (MHC) class I heavy chains, thereby decreasing the immune detection by cytotoxic T-cells. This is Translocating chain-associated membrane protein 1 from Homo sapiens (Human).